The primary structure comprises 251 residues: uncharacterized protein (251 aa).

The protein belongs to the chlamydial CPn_0206/CT_203/TC_0475 family.

This is an uncharacterized protein from Chlamydia trachomatis serovar D (strain ATCC VR-885 / DSM 19411 / UW-3/Cx).